The chain runs to 123 residues: Urotensin-2 (123 aa).

An N-terminal signal peptide occupies residues 1 to 20; that stretch reads MDRVPFCCLLFIGLLNPLLS. Propeptides lie at residues 21-104 and 107-109; these read LPVT…LART and QHK. The segment at 57–88 is disordered; the sequence is RQTMGTEAGESPGEAGPSTETPTPRGSMRKAF. C117 and C122 are oxidised to a cystine.

It belongs to the urotensin-2 family. Brain specific. Predominantly expressed in motoneurons of the brainstem and spinal cord.

It localises to the secreted. Highly potent vasoconstrictor. This chain is Urotensin-2 (Uts2), found in Mus musculus (Mouse).